The following is a 258-amino-acid chain: Protein SseB (258 aa).

May be involved in the enhancement of serine-sensitivity. The sequence is that of Protein SseB (sseB) from Escherichia coli (strain K12).